Reading from the N-terminus, the 380-residue chain is Cytochrome b (380 aa).

Helical transmembrane passes span 34–54 (FGSL…LLAA), 78–99 (WLIR…YLHI), 114–134 (WNTG…GYVL), and 179–199 (FFTL…IHLT). Residues H84 and H98 each coordinate heme b. Heme b is bound by residues H183 and H197. H202 serves as a coordination point for a ubiquinone. A run of 4 helical transmembrane segments spans residues 227–247 (TKDI…ALFS), 289–309 (LGGV…PLLH), 321–341 (LSQL…WIGS), and 348–368 (FIII…ILFP).

Belongs to the cytochrome b family. In terms of assembly, the cytochrome bc1 complex contains 11 subunits: 3 respiratory subunits (MT-CYB, CYC1 and UQCRFS1), 2 core proteins (UQCRC1 and UQCRC2) and 6 low-molecular weight proteins (UQCRH/QCR6, UQCRB/QCR7, UQCRQ/QCR8, UQCR10/QCR9, UQCR11/QCR10 and a cleavage product of UQCRFS1). This cytochrome bc1 complex then forms a dimer. Heme b is required as a cofactor.

The protein localises to the mitochondrion inner membrane. Functionally, component of the ubiquinol-cytochrome c reductase complex (complex III or cytochrome b-c1 complex) that is part of the mitochondrial respiratory chain. The b-c1 complex mediates electron transfer from ubiquinol to cytochrome c. Contributes to the generation of a proton gradient across the mitochondrial membrane that is then used for ATP synthesis. The polypeptide is Cytochrome b (MT-CYB) (Eudyptes chrysocome (Western rockhopper penguin)).